The following is a 314-amino-acid chain: 4-hydroxy-3-methylbut-2-enyl diphosphate reductase (314 aa).

Cysteine 12 provides a ligand contact to [4Fe-4S] cluster. (2E)-4-hydroxy-3-methylbut-2-enyl diphosphate contacts are provided by histidine 41 and histidine 74. Dimethylallyl diphosphate contacts are provided by histidine 41 and histidine 74. Residues histidine 41 and histidine 74 each contribute to the isopentenyl diphosphate site. Cysteine 96 provides a ligand contact to [4Fe-4S] cluster. Residue histidine 124 coordinates (2E)-4-hydroxy-3-methylbut-2-enyl diphosphate. Residue histidine 124 participates in dimethylallyl diphosphate binding. Residue histidine 124 coordinates isopentenyl diphosphate. Glutamate 126 acts as the Proton donor in catalysis. Threonine 167 contacts (2E)-4-hydroxy-3-methylbut-2-enyl diphosphate. Position 197 (cysteine 197) interacts with [4Fe-4S] cluster. Residues serine 225, serine 226, asparagine 227, and serine 269 each contribute to the (2E)-4-hydroxy-3-methylbut-2-enyl diphosphate site. Residues serine 225, serine 226, asparagine 227, and serine 269 each coordinate dimethylallyl diphosphate. Positions 225, 226, 227, and 269 each coordinate isopentenyl diphosphate.

Belongs to the IspH family. [4Fe-4S] cluster serves as cofactor.

It carries out the reaction isopentenyl diphosphate + 2 oxidized [2Fe-2S]-[ferredoxin] + H2O = (2E)-4-hydroxy-3-methylbut-2-enyl diphosphate + 2 reduced [2Fe-2S]-[ferredoxin] + 2 H(+). The enzyme catalyses dimethylallyl diphosphate + 2 oxidized [2Fe-2S]-[ferredoxin] + H2O = (2E)-4-hydroxy-3-methylbut-2-enyl diphosphate + 2 reduced [2Fe-2S]-[ferredoxin] + 2 H(+). It functions in the pathway isoprenoid biosynthesis; dimethylallyl diphosphate biosynthesis; dimethylallyl diphosphate from (2E)-4-hydroxy-3-methylbutenyl diphosphate: step 1/1. Its pathway is isoprenoid biosynthesis; isopentenyl diphosphate biosynthesis via DXP pathway; isopentenyl diphosphate from 1-deoxy-D-xylulose 5-phosphate: step 6/6. Its function is as follows. Catalyzes the conversion of 1-hydroxy-2-methyl-2-(E)-butenyl 4-diphosphate (HMBPP) into a mixture of isopentenyl diphosphate (IPP) and dimethylallyl diphosphate (DMAPP). Acts in the terminal step of the DOXP/MEP pathway for isoprenoid precursor biosynthesis. The polypeptide is 4-hydroxy-3-methylbut-2-enyl diphosphate reductase (Haemophilus influenzae (strain PittEE)).